The following is a 565-amino-acid chain: Sulfite reductase [NADPH] hemoprotein beta-component (565 aa).

[4Fe-4S] cluster is bound by residues C429, C435, C474, and C478. C478 provides a ligand contact to siroheme.

The protein belongs to the nitrite and sulfite reductase 4Fe-4S domain family. Alpha(8)-beta(8). The alpha component is a flavoprotein, the beta component is a hemoprotein. Requires siroheme as cofactor. [4Fe-4S] cluster serves as cofactor.

The catalysed reaction is hydrogen sulfide + 3 NADP(+) + 3 H2O = sulfite + 3 NADPH + 4 H(+). It participates in sulfur metabolism; hydrogen sulfide biosynthesis; hydrogen sulfide from sulfite (NADPH route): step 1/1. Its function is as follows. Component of the sulfite reductase complex that catalyzes the 6-electron reduction of sulfite to sulfide. This is one of several activities required for the biosynthesis of L-cysteine from sulfate. The sequence is that of Sulfite reductase [NADPH] hemoprotein beta-component from Shewanella sp. (strain W3-18-1).